The sequence spans 505 residues: MFSLQDICRKYLFQLPDSFDEYTLQVLGLYWEKHGSLQRIRKDAVFVQRNLIISINEALRIAASEGNGRVVKLLLSWEGNFHYVIIGALEGDHYDLIHKYGSQIEDYHMILSSIHNANTFEKCHELSNCDMWCLIQNAIKYNMLPILQKHRNILTHEGENQELFEMACEEQKYDIVLWIGQTLMLNEPEFIFDIAFERIDFSLLTMGYSLLFNNKMSSIDIHDEEDLISLLTEHLEKAATKGCFFFMLETLKHGGNVNMAVLSKAVEYNHRKILDYFIRQKCLSRKDIEKLLLVAISNSASKKTLNLLLSYLNHSVKNIIGKIVQSVLKNGDFTIIIFLKKKKINLVEPALIGFINYYYSYCFLEQFIHEFDIRPEKMIKMAARKGKLNMIIEFLNEKYVHKDDLGAIFKFLKNLVCTMKHKKGKETLIVLIHKIYQVIQLETKEKFKLLRFYVMHDATIQFISMYKDCFNLAGFKPFLLECLDIAIKKNYPDMIRNIETLLKCE.

This sequence belongs to the asfivirus MGF 505 family.

Plays a role in virus cell tropism, and may be required for efficient virus replication in macrophages. This chain is Protein MGF 505-4R, found in Ornithodoros (relapsing fever ticks).